Here is a 776-residue protein sequence, read N- to C-terminus: FT-interacting protein 4 (776 aa).

The segment covering methionine 1–proline 16 has biased composition (basic and acidic residues). The segment at methionine 1–valine 23 is disordered. 3 C2 domains span residues lysine 22–tyrosine 142, valine 181–phenylalanine 305, and tyrosine 346–tyrosine 474. Aspartate 55, aspartate 61, aspartate 108, aspartate 110, and aspartate 115 together coordinate Ca(2+). The next 3 membrane-spanning stretches (helical) occupy residues isoleucine 577–tryptophan 597, isoleucine 608–leucine 628, and leucine 719–valine 739.

Belongs to the MCTP family. Interacts with and regulates subcellular localization and trafficking of STM. Ca(2+) is required as a cofactor. As to expression, highly expressed in both vegetative and inflorescence shoot apical meristems (SAMs). Accumulates in root meristems. Observed in flowers.

It localises to the endoplasmic reticulum membrane. Its subcellular location is the cytoplasm. The protein localises to the vesicle. The protein resides in the cell membrane. It is found in the endosome membrane. It localises to the golgi apparatus membrane. Required for proliferation and differentiation of shoot stem cells in the shoot apical meristem (SAM), thus determining the appropriate balance between the maintenance of shoot stem cells and their differentiation into other aboveground plant parts via the control of subcellular localization and intercellular trafficking of STM in the shoot apex. Prevents intracellular trafficking of STM to the plasma membrane in cells in the peripheral shoot meristem region thus facilitating STM recycling to the nucleus to maintain stem cells. May function as a signaling molecule by regulating the trafficking of other regulators. The sequence is that of FT-interacting protein 4 from Arabidopsis thaliana (Mouse-ear cress).